The following is a 487-amino-acid chain: Probable cobyric acid synthase (487 aa).

In terms of domain architecture, GATase cobBQ-type spans 249-435; the sequence is DVDIAVVRFP…LHGIFNNASF (187 aa). The active-site Nucleophile is the cysteine 328. Histidine 427 is an active-site residue.

Belongs to the CobB/CobQ family. CobQ subfamily.

Its pathway is cofactor biosynthesis; adenosylcobalamin biosynthesis. Its function is as follows. Catalyzes amidations at positions B, D, E, and G on adenosylcobyrinic A,C-diamide. NH(2) groups are provided by glutamine, and one molecule of ATP is hydrogenolyzed for each amidation. The sequence is that of Probable cobyric acid synthase from Methanocella arvoryzae (strain DSM 22066 / NBRC 105507 / MRE50).